A 747-amino-acid chain; its full sequence is DNA ligase (747 aa).

NAD(+) contacts are provided by residues Asp-33 to Asp-37, Ser-83 to Leu-84, and Glu-113. Catalysis depends on Lys-115, which acts as the N6-AMP-lysine intermediate. NAD(+) contacts are provided by Arg-136, Glu-174, Lys-299, and Lys-323. Zn(2+) is bound by residues Cys-417, Cys-420, Cys-436, and Cys-442. Residues Thr-659–Glu-747 form the BRCT domain.

Belongs to the NAD-dependent DNA ligase family. LigA subfamily. Mg(2+) is required as a cofactor. Requires Mn(2+) as cofactor.

The catalysed reaction is NAD(+) + (deoxyribonucleotide)n-3'-hydroxyl + 5'-phospho-(deoxyribonucleotide)m = (deoxyribonucleotide)n+m + AMP + beta-nicotinamide D-nucleotide.. In terms of biological role, DNA ligase that catalyzes the formation of phosphodiester linkages between 5'-phosphoryl and 3'-hydroxyl groups in double-stranded DNA using NAD as a coenzyme and as the energy source for the reaction. It is essential for DNA replication and repair of damaged DNA. The chain is DNA ligase from Leifsonia xyli subsp. xyli (strain CTCB07).